The following is a 120-amino-acid chain: MTHDVSKYALGRIAEDKACDYLSVNGYIVLDRNWYCRFGELDIIARKNGVIVAVEVKGGKRNADYPICNITVKKLSKLTFLLKAWLHENKLNEFCIDLRIDAISVTFIPELQIRHFVGIL.

It belongs to the UPF0102 family.

In Tropheryma whipplei (strain Twist) (Whipple's bacillus), this protein is UPF0102 protein TWT_455.